The chain runs to 467 residues: UDP-N-acetylmuramate--L-alanine ligase (467 aa).

112 to 118 provides a ligand contact to ATP; the sequence is GTHGKTT.

It belongs to the MurCDEF family.

The protein resides in the cytoplasm. It carries out the reaction UDP-N-acetyl-alpha-D-muramate + L-alanine + ATP = UDP-N-acetyl-alpha-D-muramoyl-L-alanine + ADP + phosphate + H(+). It functions in the pathway cell wall biogenesis; peptidoglycan biosynthesis. In terms of biological role, cell wall formation. This Paraburkholderia xenovorans (strain LB400) protein is UDP-N-acetylmuramate--L-alanine ligase.